The following is a 523-amino-acid chain: 2-isopropylmalate synthase (523 aa).

In terms of domain architecture, Pyruvate carboxyltransferase spans 5-267; sequence VIIFDTTLRD…ETGINAKEIH (263 aa). D14, H202, H204, and N238 together coordinate Mn(2+). Residues 392-523 form a regulatory domain region; the sequence is KLQQLVVHSD…QQEKQVLGGV (132 aa).

It belongs to the alpha-IPM synthase/homocitrate synthase family. LeuA type 1 subfamily. In terms of assembly, homodimer. The cofactor is Mn(2+).

It is found in the cytoplasm. The enzyme catalyses 3-methyl-2-oxobutanoate + acetyl-CoA + H2O = (2S)-2-isopropylmalate + CoA + H(+). It participates in amino-acid biosynthesis; L-leucine biosynthesis; L-leucine from 3-methyl-2-oxobutanoate: step 1/4. In terms of biological role, catalyzes the condensation of the acetyl group of acetyl-CoA with 3-methyl-2-oxobutanoate (2-ketoisovalerate) to form 3-carboxy-3-hydroxy-4-methylpentanoate (2-isopropylmalate). The protein is 2-isopropylmalate synthase of Shewanella piezotolerans (strain WP3 / JCM 13877).